Consider the following 365-residue polypeptide: NAD(P)H-quinone oxidoreductase subunit 1, chloroplastic (365 aa).

6 helical membrane-spanning segments follow: residues 30-50 (LVPI…IVWL), 104-124 (IAVI…HFVL), 129-149 (IGVF…LMSG), 253-273 (FGLF…FVAV), 302-322 (VFGT…FLFI), and 338-358 (LLNL…LLTT).

It belongs to the complex I subunit 1 family. NDH is composed of at least 16 different subunits, 5 of which are encoded in the nucleus.

Its subcellular location is the plastid. It localises to the chloroplast thylakoid membrane. It catalyses the reaction a plastoquinone + NADH + (n+1) H(+)(in) = a plastoquinol + NAD(+) + n H(+)(out). It carries out the reaction a plastoquinone + NADPH + (n+1) H(+)(in) = a plastoquinol + NADP(+) + n H(+)(out). Its function is as follows. NDH shuttles electrons from NAD(P)H:plastoquinone, via FMN and iron-sulfur (Fe-S) centers, to quinones in the photosynthetic chain and possibly in a chloroplast respiratory chain. The immediate electron acceptor for the enzyme in this species is believed to be plastoquinone. Couples the redox reaction to proton translocation, and thus conserves the redox energy in a proton gradient. The protein is NAD(P)H-quinone oxidoreductase subunit 1, chloroplastic of Populus trichocarpa (Western balsam poplar).